Here is a 230-residue protein sequence, read N- to C-terminus: Lactate utilization protein C (230 aa).

The protein belongs to the LutC/YkgG family.

In terms of biological role, is involved in L-lactate degradation and allows cells to grow with lactate as the sole carbon source. In Halalkalibacterium halodurans (strain ATCC BAA-125 / DSM 18197 / FERM 7344 / JCM 9153 / C-125) (Bacillus halodurans), this protein is Lactate utilization protein C.